The chain runs to 129 residues: Protachykinin-1 (129 aa).

Residues Met-1–Ala-19 form the signal peptide. Residues Glu-20–Ala-56 constitute a propeptide that is removed on maturation. A methionine amide mark is found at Met-68 and Met-107.

Belongs to the tachykinin family. In terms of processing, the substance P form is cleaved at Pro-59 by the prolyl endopeptidase FAP (seprase) activity (in vitro). Substance P is also cleaved and degraded by Angiotensin-converting enzyme (ACE) and neprilysin (MME).

The protein localises to the secreted. Functionally, tachykinins are active peptides which excite neurons, evoke behavioral responses, are potent vasodilators and secretagogues, and contract (directly or indirectly) many smooth muscles. The protein is Protachykinin-1 (TAC1) of Homo sapiens (Human).